The chain runs to 504 residues: Deoxyguanosinetriphosphate triphosphohydrolase (504 aa).

Residues 66-273 enclose the HD domain; it reads RLTHSLEVQQ…MEAADDISYC (208 aa).

It belongs to the dGTPase family. Type 1 subfamily. Homotetramer. Mg(2+) is required as a cofactor.

It carries out the reaction dGTP + H2O = 2'-deoxyguanosine + triphosphate + H(+). In terms of biological role, dGTPase preferentially hydrolyzes dGTP over the other canonical NTPs. This chain is Deoxyguanosinetriphosphate triphosphohydrolase, found in Cronobacter sakazakii (strain ATCC BAA-894) (Enterobacter sakazakii).